Consider the following 186-residue polypeptide: Elongation factor P (186 aa).

It belongs to the elongation factor P family.

It is found in the cytoplasm. It functions in the pathway protein biosynthesis; polypeptide chain elongation. In terms of biological role, involved in peptide bond synthesis. Stimulates efficient translation and peptide-bond synthesis on native or reconstituted 70S ribosomes in vitro. Probably functions indirectly by altering the affinity of the ribosome for aminoacyl-tRNA, thus increasing their reactivity as acceptors for peptidyl transferase. In Neisseria gonorrhoeae (strain NCCP11945), this protein is Elongation factor P.